Consider the following 408-residue polypeptide: Arginine deiminase (408 aa).

Cys-397 functions as the Amidino-cysteine intermediate in the catalytic mechanism.

This sequence belongs to the arginine deiminase family.

It is found in the cytoplasm. It carries out the reaction L-arginine + H2O = L-citrulline + NH4(+). The protein operates within amino-acid degradation; L-arginine degradation via ADI pathway; carbamoyl phosphate from L-arginine: step 1/2. The sequence is that of Arginine deiminase from Listeria innocua serovar 6a (strain ATCC BAA-680 / CLIP 11262).